The sequence spans 501 residues: Lysine--tRNA ligase (501 aa).

Positions 411 and 418 each coordinate Mg(2+).

This sequence belongs to the class-II aminoacyl-tRNA synthetase family. In terms of assembly, homodimer. It depends on Mg(2+) as a cofactor.

It localises to the cytoplasm. It catalyses the reaction tRNA(Lys) + L-lysine + ATP = L-lysyl-tRNA(Lys) + AMP + diphosphate. The protein is Lysine--tRNA ligase of Aliivibrio fischeri (strain ATCC 700601 / ES114) (Vibrio fischeri).